Here is a 331-residue protein sequence, read N- to C-terminus: Bifunctional nuclease 1 (331 aa).

The BFN domain maps to 126 to 261; the sequence is CVQNNPRVLR…RIAYNNGLKV (136 aa). The region spanning 291–326 is the UVR domain; it reads EAQEFDLVRNMLVAAVEERYKDAAQYRDQLFMFRAK.

It belongs to the bifunctional nuclease family.

It localises to the nucleus. Bifunctional nuclease with both RNase and DNase activities. Involved in basal defense response. Participates in abscisic acid-derived callose deposition following infection by a necrotrophic pathogen. In Oryza sativa subsp. indica (Rice), this protein is Bifunctional nuclease 1 (BBD1).